Here is a 335-residue protein sequence, read N- to C-terminus: Carboxylesterase 1 (335 aa).

Positions 90–92 (HGG) match the Involved in the stabilization of the negatively charged intermediate by the formation of the oxyanion hole motif. Paraoxon contacts are provided by residues 92 to 93 (GG), S169, and A170. S169 is a catalytic residue. Residues D276 and H306 contribute to the active site.

It belongs to the 'GDXG' lipolytic enzyme family.

It catalyses the reaction a carboxylic ester + H2O = an alcohol + a carboxylate + H(+). Is inhibited by the organophosphates paraoxon and dimethylchlorophosphate (DMCP). Its function is as follows. Carboxylesterase acting on esters with varying acyl chain length. This is Carboxylesterase 1 (CXE1) from Actinidia eriantha (Velvet vine).